A 753-amino-acid polypeptide reads, in one-letter code: 5-methyltetrahydropteroyltriglutamate--homocysteine methyltransferase (753 aa).

5-methyltetrahydropteroyltri-L-glutamate is bound by residues Arg-17 to Lys-20 and Lys-117. Residues Ile-431–Ser-433 and Glu-484 each bind L-homocysteine. L-methionine is bound by residues Ile-431 to Ser-433 and Glu-484. Residues Arg-515–Cys-516 and Trp-561 each bind 5-methyltetrahydropteroyltri-L-glutamate. Asp-599 lines the L-homocysteine pocket. Position 599 (Asp-599) interacts with L-methionine. 5-methyltetrahydropteroyltri-L-glutamate is bound at residue Glu-605. Residues His-641, Cys-643, and Glu-665 each coordinate Zn(2+). His-694 (proton donor) is an active-site residue. Cys-726 serves as a coordination point for Zn(2+).

This sequence belongs to the vitamin-B12 independent methionine synthase family. Zn(2+) serves as cofactor.

The enzyme catalyses 5-methyltetrahydropteroyltri-L-glutamate + L-homocysteine = tetrahydropteroyltri-L-glutamate + L-methionine. Its pathway is amino-acid biosynthesis; L-methionine biosynthesis via de novo pathway; L-methionine from L-homocysteine (MetE route): step 1/1. Its function is as follows. Catalyzes the transfer of a methyl group from 5-methyltetrahydrofolate to homocysteine resulting in methionine formation. This chain is 5-methyltetrahydropteroyltriglutamate--homocysteine methyltransferase, found in Escherichia coli O6:K15:H31 (strain 536 / UPEC).